Here is a 2412-residue protein sequence, read N- to C-terminus: Genome polyprotein 1 (2412 aa).

A disordered region spans residues Met1 to Arg23. A Helicase ATP-binding domain is found at Ala474–Glu632. ATP is bound at residue Gly487–Ser494. The Helicase C-terminal domain occupies Gly647–Phe813. Tyr1234 carries the O-(5'-phospho-RNA)-tyrosine modification. The 216-residue stretch at Ile1359–Phe1574 folds into the Peptidase C4 domain. Catalysis depends on for nuclear inclusion protein A activity residues His1404, Asp1440, and Cys1507. The 125-residue stretch at Trp1858 to Phe1982 folds into the RdRp catalytic domain. A disordered region spans residues Pro2178 to Trp2202.

The protein belongs to the bymoviruses polyprotein 1 family. Post-translationally, VPg is uridylylated by the polymerase and is covalently attached to the 5'-end of the genomic RNA. This uridylylated form acts as a nucleotide-peptide primer for the polymerase. The viral RNA1 of bymoviruses is expressed as a single polyprotein which undergoes post-translational proteolytic processing by the main proteinase NIa-pro resulting in the production of at least eight individual proteins.

It is found in the host cytoplasmic vesicle. It localises to the virion. The catalysed reaction is RNA(n) + a ribonucleoside 5'-triphosphate = RNA(n+1) + diphosphate. It catalyses the reaction Hydrolyzes glutaminyl bonds, and activity is further restricted by preferences for the amino acids in P6 - P1' that vary with the species of potyvirus, e.g. Glu-Xaa-Xaa-Tyr-Xaa-Gln-|-(Ser or Gly) for the enzyme from tobacco etch virus. The natural substrate is the viral polyprotein, but other proteins and oligopeptides containing the appropriate consensus sequence are also cleaved.. Indispensable for virus replication. In terms of biological role, mediates the cap-independent, EIF4E-dependent translation of viral genomic RNAs. Binds to the cap-binding site of host EIF4E and thus interferes with the host EIF4E-dependent mRNA export and translation. VPg-RNA directly binds EIF4E and is a template for transcription. Also forms trimeric complexes with EIF4E-EIF4G, which are templates for translation. Its function is as follows. Has RNA-binding and proteolytic activities. Functionally, an RNA-dependent RNA polymerase that plays an essential role in the virus replication. The chain is Genome polyprotein 1 from Hordeum vulgare (Barley).